A 95-amino-acid polypeptide reads, in one-letter code: Orphan antitoxin ParD2 (95 aa).

Functionally, antitoxin component of a non-functional type II toxin-antitoxin (TA system). Does not neutralize the effect of any of the RelE or ParE toxins. The protein is Orphan antitoxin ParD2 (parD2) of Caulobacter vibrioides (strain ATCC 19089 / CIP 103742 / CB 15) (Caulobacter crescentus).